Consider the following 363-residue polypeptide: S-adenosylmethionine:tRNA ribosyltransferase-isomerase (363 aa).

It belongs to the QueA family. As to quaternary structure, monomer.

Its subcellular location is the cytoplasm. The enzyme catalyses 7-aminomethyl-7-carbaguanosine(34) in tRNA + S-adenosyl-L-methionine = epoxyqueuosine(34) in tRNA + adenine + L-methionine + 2 H(+). It participates in tRNA modification; tRNA-queuosine biosynthesis. Functionally, transfers and isomerizes the ribose moiety from AdoMet to the 7-aminomethyl group of 7-deazaguanine (preQ1-tRNA) to give epoxyqueuosine (oQ-tRNA). This chain is S-adenosylmethionine:tRNA ribosyltransferase-isomerase, found in Haemophilus influenzae (strain PittEE).